Consider the following 209-residue polypeptide: Uracil phosphoribosyltransferase (209 aa).

5-phospho-alpha-D-ribose 1-diphosphate contacts are provided by residues Arg-79, Arg-104, and 131-139 (DPMLATGGS). Uracil contacts are provided by residues Val-194 and 199–201 (GDA). Asp-200 is a binding site for 5-phospho-alpha-D-ribose 1-diphosphate.

The protein belongs to the UPRTase family. It depends on Mg(2+) as a cofactor.

The catalysed reaction is UMP + diphosphate = 5-phospho-alpha-D-ribose 1-diphosphate + uracil. It functions in the pathway pyrimidine metabolism; UMP biosynthesis via salvage pathway; UMP from uracil: step 1/1. With respect to regulation, allosterically activated by GTP. Its function is as follows. Catalyzes the conversion of uracil and 5-phospho-alpha-D-ribose 1-diphosphate (PRPP) to UMP and diphosphate. This Bacillus cereus (strain Q1) protein is Uracil phosphoribosyltransferase.